The chain runs to 92 residues: MSTEIGTVHRQRALELLEADSHKIRRLIEVQLANLTMPQCPLYEEVLDTQMFGLSRQIDFAVRLELIDASEGKQLLDSLEQQLSDLHDAETC.

Belongs to the UPF0358 family.

This chain is UPF0358 protein Exig_1994, found in Exiguobacterium sibiricum (strain DSM 17290 / CCUG 55495 / CIP 109462 / JCM 13490 / 255-15).